The chain runs to 318 residues: NADH-ubiquinone oxidoreductase chain 1 (318 aa).

The next 8 helical transmembrane spans lie at 2-22 (FMIN…FLTL), 68-88 (ISMF…MWTP), 100-120 (LGVL…LWSG), 146-166 (LAII…PTLI), 171-191 (HMWL…STLA), 222-242 (LFFL…TILF), 253-273 (ELYT…FLWV), and 293-313 (FLPL…ITAG).

It belongs to the complex I subunit 1 family. As to quaternary structure, core subunit of respiratory chain NADH dehydrogenase (Complex I) which is composed of 45 different subunits.

It localises to the mitochondrion inner membrane. It carries out the reaction a ubiquinone + NADH + 5 H(+)(in) = a ubiquinol + NAD(+) + 4 H(+)(out). Core subunit of the mitochondrial membrane respiratory chain NADH dehydrogenase (Complex I) which catalyzes electron transfer from NADH through the respiratory chain, using ubiquinone as an electron acceptor. Essential for the catalytic activity and assembly of complex I. The chain is NADH-ubiquinone oxidoreductase chain 1 (MT-ND1) from Hipposideros diadema (Diadem leaf-nosed bat).